Reading from the N-terminus, the 189-residue chain is Ion-translocating oxidoreductase complex subunit B (189 aa).

The segment at 1–26 (MSQVIIAIILLGLLALAFGALLGYAA) is hydrophobic. One can recognise a 4Fe-4S domain in the interval 32–90 (EGDPIIDQAEALLPQTQCGQCGYPGCRPYAEAIANGEKINKCPPGGTATMEKLAELMGV). Residues Cys49, Cys52, Cys57, Cys73, Cys114, Cys117, Cys120, Cys124, Cys144, Cys147, Cys150, and Cys154 each coordinate [4Fe-4S] cluster. 4Fe-4S ferredoxin-type domains are found at residues 105 to 134 (KVAF…GTGK) and 135 to 164 (QMHT…MIPV).

It belongs to the 4Fe4S bacterial-type ferredoxin family. RnfB subfamily. As to quaternary structure, the complex is composed of six subunits: RnfA, RnfB, RnfC, RnfD, RnfE and RnfG. [4Fe-4S] cluster serves as cofactor.

The protein localises to the cell inner membrane. Part of a membrane-bound complex that couples electron transfer with translocation of ions across the membrane. The protein is Ion-translocating oxidoreductase complex subunit B of Shewanella loihica (strain ATCC BAA-1088 / PV-4).